The sequence spans 603 residues: Carbon catabolite repressor protein 4 homolog 2 (603 aa).

A disordered region spans residues 115-136 (ENNANEDDDLNRNNSAGSGSLA). The segment covering 126 to 136 (RNNSAGSGSLA) has biased composition (low complexity). Glutamate 302 contacts Mg(2+).

The protein belongs to the CCR4/nocturin family. As to quaternary structure, component of the CCR4-NOT complex, at least composed of CRR4 and CAF1 proteins. It depends on Mg(2+) as a cofactor.

Its subcellular location is the nucleus. It is found in the cytoplasm. It carries out the reaction Exonucleolytic cleavage of poly(A) to 5'-AMP.. Functionally, acts as a catalytic component of the CCR4-NOT core complex, which in the nucleus seems to be a general transcription factor, and in the cytoplasm the major mRNA deadenylase involved in mRNA turnover. The protein is Carbon catabolite repressor protein 4 homolog 2 (CCR4-2) of Arabidopsis thaliana (Mouse-ear cress).